The sequence spans 151 residues: Ribosome maturation factor RimP (151 aa).

This sequence belongs to the RimP family.

It localises to the cytoplasm. Its function is as follows. Required for maturation of 30S ribosomal subunits. The chain is Ribosome maturation factor RimP from Pasteurella multocida (strain Pm70).